We begin with the raw amino-acid sequence, 417 residues long: Serine hydroxymethyltransferase (417 aa).

Residues Leu-121 and 125-127 (GHL) each bind (6S)-5,6,7,8-tetrahydrofolate. Residue Lys-229 is modified to N6-(pyridoxal phosphate)lysine. 355–357 (SPF) lines the (6S)-5,6,7,8-tetrahydrofolate pocket.

Belongs to the SHMT family. In terms of assembly, homodimer. Requires pyridoxal 5'-phosphate as cofactor.

It localises to the cytoplasm. The catalysed reaction is (6R)-5,10-methylene-5,6,7,8-tetrahydrofolate + glycine + H2O = (6S)-5,6,7,8-tetrahydrofolate + L-serine. It participates in one-carbon metabolism; tetrahydrofolate interconversion. The protein operates within amino-acid biosynthesis; glycine biosynthesis; glycine from L-serine: step 1/1. Catalyzes the reversible interconversion of serine and glycine with tetrahydrofolate (THF) serving as the one-carbon carrier. This reaction serves as the major source of one-carbon groups required for the biosynthesis of purines, thymidylate, methionine, and other important biomolecules. Also exhibits THF-independent aldolase activity toward beta-hydroxyamino acids, producing glycine and aldehydes, via a retro-aldol mechanism. This chain is Serine hydroxymethyltransferase, found in Shewanella putrefaciens (strain CN-32 / ATCC BAA-453).